The chain runs to 449 residues: Histidinol dehydrogenase (449 aa).

Residues Tyr135, Gln199, and Asn229 each coordinate NAD(+). Substrate-binding residues include Thr252, Gln274, and His277. Residues Gln274 and His277 each coordinate Zn(2+). Active-site proton acceptor residues include Glu343 and His344. Substrate-binding residues include His344, Asp377, Glu431, and His436. Asp377 serves as a coordination point for Zn(2+). A Zn(2+)-binding site is contributed by His436.

It belongs to the histidinol dehydrogenase family. Zn(2+) serves as cofactor.

It carries out the reaction L-histidinol + 2 NAD(+) + H2O = L-histidine + 2 NADH + 3 H(+). The protein operates within amino-acid biosynthesis; L-histidine biosynthesis; L-histidine from 5-phospho-alpha-D-ribose 1-diphosphate: step 9/9. In terms of biological role, catalyzes the sequential NAD-dependent oxidations of L-histidinol to L-histidinaldehyde and then to L-histidine. This is Histidinol dehydrogenase from Corynebacterium diphtheriae (strain ATCC 700971 / NCTC 13129 / Biotype gravis).